A 163-amino-acid polypeptide reads, in one-letter code: 6,7-dimethyl-8-ribityllumazine synthase (163 aa).

5-amino-6-(D-ribitylamino)uracil contacts are provided by residues Phe22, 56–58 (TFE), and 80–82 (AVI). 85–86 (GT) is a (2S)-2-hydroxy-3-oxobutyl phosphate binding site. The active-site Proton donor is the His88. Met113 contributes to the 5-amino-6-(D-ribitylamino)uracil binding site. A (2S)-2-hydroxy-3-oxobutyl phosphate-binding site is contributed by Arg127.

The protein belongs to the DMRL synthase family.

It catalyses the reaction (2S)-2-hydroxy-3-oxobutyl phosphate + 5-amino-6-(D-ribitylamino)uracil = 6,7-dimethyl-8-(1-D-ribityl)lumazine + phosphate + 2 H2O + H(+). It functions in the pathway cofactor biosynthesis; riboflavin biosynthesis; riboflavin from 2-hydroxy-3-oxobutyl phosphate and 5-amino-6-(D-ribitylamino)uracil: step 1/2. In terms of biological role, catalyzes the formation of 6,7-dimethyl-8-ribityllumazine by condensation of 5-amino-6-(D-ribitylamino)uracil with 3,4-dihydroxy-2-butanone 4-phosphate. This is the penultimate step in the biosynthesis of riboflavin. In Anaeromyxobacter sp. (strain Fw109-5), this protein is 6,7-dimethyl-8-ribityllumazine synthase.